The chain runs to 471 residues: Adenosylhomocysteinase (471 aa).

Substrate is bound by residues Thr60, Asp135, and Glu196. 197–199 is an NAD(+) binding site; that stretch reads TTT. 2 residues coordinate substrate: Lys226 and Asp230. NAD(+) is bound by residues Asn231, 260–265, Glu283, Asn318, 339–341, and Asn387; these read GYGDVG and IGH.

The protein belongs to the adenosylhomocysteinase family. NAD(+) serves as cofactor.

It is found in the cytoplasm. It catalyses the reaction S-adenosyl-L-homocysteine + H2O = L-homocysteine + adenosine. The protein operates within amino-acid biosynthesis; L-homocysteine biosynthesis; L-homocysteine from S-adenosyl-L-homocysteine: step 1/1. May play a key role in the regulation of the intracellular concentration of adenosylhomocysteine. This Chlorobaculum tepidum (strain ATCC 49652 / DSM 12025 / NBRC 103806 / TLS) (Chlorobium tepidum) protein is Adenosylhomocysteinase.